The chain runs to 316 residues: Ornithine carbamoyltransferase (316 aa).

Carbamoyl phosphate-binding positions include 57–60 (STRT), Q84, R108, and 135–138 (HPCQ). L-ornithine contacts are provided by residues N166, D230, and 234 to 235 (SM). Carbamoyl phosphate is bound by residues 269–270 (CL) and R297.

The protein belongs to the aspartate/ornithine carbamoyltransferase superfamily. OTCase family.

The protein localises to the cytoplasm. The catalysed reaction is carbamoyl phosphate + L-ornithine = L-citrulline + phosphate + H(+). It participates in amino-acid degradation; L-arginine degradation via ADI pathway; carbamoyl phosphate from L-arginine: step 2/2. Functionally, reversibly catalyzes the transfer of the carbamoyl group from carbamoyl phosphate (CP) to the N(epsilon) atom of ornithine (ORN) to produce L-citrulline. The sequence is that of Ornithine carbamoyltransferase from Bacillus cereus (strain 03BB102).